Here is a 351-residue protein sequence, read N- to C-terminus: Cell shape-determining protein MreB (351 aa).

ATP is bound by residues Thr-20–Asn-22, Gly-169–Thr-171, Glu-217–Lys-220, and Gly-299–Leu-302.

The protein belongs to the FtsA/MreB family. Forms polymers.

It localises to the cytoplasm. Its function is as follows. Forms membrane-associated dynamic filaments that are essential for cell shape determination. Acts by regulating cell wall synthesis and cell elongation, and thus cell shape. A feedback loop between cell geometry and MreB localization may maintain elongated cell shape by targeting cell wall growth to regions of negative cell wall curvature. The chain is Cell shape-determining protein MreB from Pasteurella multocida (strain Pm70).